Reading from the N-terminus, the 267-residue chain is Actin maturation protease (267 aa).

The interval 1 to 32 (MSNISSVAPPPPPPPMIVTPSTPATTKERPVG) is disordered. The span at 8 to 17 (APPPPPPPMI) shows a compositional bias: pro residues. The peptidase C39-like stretch occupies residues 74-188 (SIVQVGPTCG…WALIVGYLVD (115 aa)). The active site involves Cys-82.

This sequence belongs to the ACTMAP family.

The catalysed reaction is N-terminal N(alpha)-acetyl-L-cysteinyl-L-aspartyl-[protein] + H2O = N-terminal L-aspartyl-[protein] + N-acetyl-L-cysteine. Its function is as follows. Actin maturation protease that specifically mediates the cleavage of immature acetylated N-terminal actin, thereby contributing to actin maturation. In Drosophila melanogaster (Fruit fly), this protein is Actin maturation protease.